Consider the following 150-residue polypeptide: UPF0260 protein PP_4587 (150 aa).

The protein belongs to the UPF0260 family.

In Pseudomonas putida (strain ATCC 47054 / DSM 6125 / CFBP 8728 / NCIMB 11950 / KT2440), this protein is UPF0260 protein PP_4587.